The primary structure comprises 237 residues: Phosphoribosylaminoimidazole-succinocarboxamide synthase (237 aa).

Belongs to the SAICAR synthetase family.

It carries out the reaction 5-amino-1-(5-phospho-D-ribosyl)imidazole-4-carboxylate + L-aspartate + ATP = (2S)-2-[5-amino-1-(5-phospho-beta-D-ribosyl)imidazole-4-carboxamido]succinate + ADP + phosphate + 2 H(+). The protein operates within purine metabolism; IMP biosynthesis via de novo pathway; 5-amino-1-(5-phospho-D-ribosyl)imidazole-4-carboxamide from 5-amino-1-(5-phospho-D-ribosyl)imidazole-4-carboxylate: step 1/2. This chain is Phosphoribosylaminoimidazole-succinocarboxamide synthase, found in Listeria monocytogenes serotype 4a (strain HCC23).